The sequence spans 351 residues: Heat-inducible transcription repressor HrcA (351 aa).

It belongs to the HrcA family.

Its function is as follows. Negative regulator of class I heat shock genes (grpE-dnaK-dnaJ and groELS operons). Prevents heat-shock induction of these operons. The chain is Heat-inducible transcription repressor HrcA from Clostridium tetani (strain Massachusetts / E88).